The sequence spans 1134 residues: Isoleucine--tRNA ligase (1134 aa).

The short motif at 52 to 62 (PFANGLPHYGH) is the 'HIGH' region element. The 'KMSKS' region motif lies at 656–660 (KLSKR). Residue K659 participates in ATP binding.

This sequence belongs to the class-I aminoacyl-tRNA synthetase family. IleS type 2 subfamily. In terms of assembly, monomer. It depends on Zn(2+) as a cofactor.

The protein resides in the cytoplasm. The enzyme catalyses tRNA(Ile) + L-isoleucine + ATP = L-isoleucyl-tRNA(Ile) + AMP + diphosphate. In terms of biological role, catalyzes the attachment of isoleucine to tRNA(Ile). As IleRS can inadvertently accommodate and process structurally similar amino acids such as valine, to avoid such errors it has two additional distinct tRNA(Ile)-dependent editing activities. One activity is designated as 'pretransfer' editing and involves the hydrolysis of activated Val-AMP. The other activity is designated 'posttransfer' editing and involves deacylation of mischarged Val-tRNA(Ile). The polypeptide is Isoleucine--tRNA ligase (Wolbachia sp. subsp. Brugia malayi (strain TRS)).